A 179-amino-acid polypeptide reads, in one-letter code: ATP-dependent protease subunit HslV (179 aa).

Thr-9 is a catalytic residue. Na(+) contacts are provided by Ala-164, Cys-167, and Thr-170.

The protein belongs to the peptidase T1B family. HslV subfamily. A double ring-shaped homohexamer of HslV is capped on each side by a ring-shaped HslU homohexamer. The assembly of the HslU/HslV complex is dependent on binding of ATP.

Its subcellular location is the cytoplasm. It carries out the reaction ATP-dependent cleavage of peptide bonds with broad specificity.. Its activity is regulated as follows. Allosterically activated by HslU binding. In terms of biological role, protease subunit of a proteasome-like degradation complex believed to be a general protein degrading machinery. The chain is ATP-dependent protease subunit HslV from Syntrophobacter fumaroxidans (strain DSM 10017 / MPOB).